A 147-amino-acid chain; its full sequence is Hemoglobin subunit beta (147 aa).

Val-2 is modified (N-acetylvaline). In terms of domain architecture, Globin spans 3-147; the sequence is HLSAEEKEAV…VANALAHKYH (145 aa). Position 45 is a phosphoserine (Ser-45). Position 60 is an N6-acetyllysine (Lys-60). Residue His-64 participates in heme b binding. At Lys-83 the chain carries N6-acetyllysine. His-93 lines the heme b pocket. Residue Cys-94 is modified to S-nitrosocysteine. Residue Lys-145 is modified to N6-acetyllysine.

The protein belongs to the globin family. Heterotetramer of two alpha chains and two beta chains. Red blood cells.

Its function is as follows. Involved in oxygen transport from the lung to the various peripheral tissues. This Sus scrofa (Pig) protein is Hemoglobin subunit beta (HBB).